Here is a 279-residue protein sequence, read N- to C-terminus: Acyl-coenzyme A thioesterase MBLAC2 (279 aa).

The residue at position 2 (serine 2) is an N-acetylserine. Residues histidine 83, histidine 85, aspartate 87, histidine 88, histidine 170, aspartate 189, and histidine 231 each coordinate Zn(2+). Cysteine 254 carries S-palmitoyl cysteine lipidation.

This sequence belongs to the metallo-beta-lactamase superfamily. Glyoxalase II family. It depends on Zn(2+) as a cofactor. Post-translationally, palmitoylated on Cys-254 by ZDHHC20.

Its subcellular location is the endoplasmic reticulum membrane. It is found in the cell membrane. It carries out the reaction hexadecanoyl-CoA + H2O = hexadecanoate + CoA + H(+). It catalyses the reaction dodecanoyl-CoA + H2O = dodecanoate + CoA + H(+). The catalysed reaction is tetradecanoyl-CoA + H2O = tetradecanoate + CoA + H(+). The enzyme catalyses octadecanoyl-CoA + H2O = octadecanoate + CoA + H(+). It carries out the reaction a beta-lactam + H2O = a substituted beta-amino acid. In terms of biological role, acyl-CoA thioesterases are a group of enzymes that catalyze the hydrolysis of acyl-CoAs to the free fatty acid and coenzyme A (CoASH), providing the potential to regulate intracellular levels of acyl-CoAs, free fatty acids and CoASH. Has an acyl-CoA thioesterase activity towards the long chain fatty acyl-CoA thioester palmitoyl-CoA (hexadecanoyl-CoA; C16:0-CoA). Displays a substrate preference for fatty acyl-CoAs with chain-lengths C12-C18. This chain is Acyl-coenzyme A thioesterase MBLAC2 (MBLAC2), found in Bos taurus (Bovine).